The following is a 775-amino-acid chain: Chondroitin sulfate synthase 2 (775 aa).

Residues 1–15 (MRASLLLSVLRPAGP) lie on the Cytoplasmic side of the membrane. A helical; Signal-anchor for type II membrane protein transmembrane segment spans residues 16 to 34 (VAVGISLGFTLSLLSVTWV). Residues 35–775 (EEPCGPGPPQ…LFEQEQGNST (741 aa)) lie on the Lumenal side of the membrane. Positions 37–100 (PCGPGPPQPG…YHPAQPGQAA (64 aa)) are disordered. Over residues 54–66 (GNTNAARRPNSVQ) the composition is skewed to polar residues. N-linked (GlcNAc...) asparagine glycosylation is found at Asn-138 and Asn-361. Asp-617 is a binding site for a divalent metal cation.

Belongs to the chondroitin N-acetylgalactosaminyltransferase family. As to quaternary structure, interacts with PRKN. Mn(2+) is required as a cofactor. The cofactor is Co(2+). As to expression, ubiquitous. Highly expressed in pancreas, ovary, brain, heart, skeletal muscle, colon, kidney, liver, stomach, spleen and placenta. In terms of tissue distribution, expressed in brain, spleen, ovary, testis, lung and peripheral mononuclear cells. Also ubiquitous.

It is found in the golgi apparatus. It localises to the golgi stack membrane. The protein localises to the cytoplasm. The protein resides in the cytosol. Its subcellular location is the mitochondrion. It is found in the mitochondrion matrix. It catalyses the reaction 3-O-(beta-D-GlcA-(1-&gt;3)-beta-D-GalNAc-(1-&gt;4)-beta-D-GlcA-(1-&gt;3)-beta-D-Gal-(1-&gt;3)-beta-D-Gal-(1-&gt;4)-beta-D-Xyl)-L-seryl-[protein] + UDP-N-acetyl-alpha-D-galactosamine = 3-O-(beta-D-GalNAc-(1-&gt;4)-beta-D-GlcA-(1-&gt;3)-beta-D-GalNAc-(1-&gt;4)-beta-D-GlcA-(1-&gt;3)-beta-D-Gal-(1-&gt;3)-beta-D-Gal-(1-&gt;4)-beta-D-Xyl)-L-seryl-[protein] + UDP + H(+). The enzyme catalyses 3-O-{beta-D-GlcA-(1-&gt;3)-[beta-D-GalNAc-(1-&gt;4)-beta-D-GlcA-(1-&gt;3)](n)-beta-D-GalNAc-(1-&gt;4)-beta-D-GlcA-(1-&gt;3)-beta-D-Gal-(1-&gt;3)-beta-D-Gal-(1-&gt;4)-beta-D-Xyl}-L-seryl-[protein] + UDP-N-acetyl-alpha-D-galactosamine = 3-O-{[beta-D-GalNAc-(1-&gt;4)-beta-D-GlcA-(1-&gt;3)](n+1)-beta-D-GalNAc-(1-&gt;4)-beta-D-GlcA-(1-&gt;3)-beta-D-Gal-(1-&gt;3)-beta-D-Gal-(1-&gt;4)-beta-D-Xyl}-L-seryl-[protein] + UDP + H(+). It carries out the reaction 3-O-(beta-D-GalNAc-(1-&gt;4)-beta-D-GlcA-(1-&gt;3)-beta-D-Gal-(1-&gt;3)-beta-D-Gal-(1-&gt;4)-beta-D-Xyl)-L-seryl-[protein] + UDP-alpha-D-glucuronate = 3-O-(beta-D-GlcA-(1-&gt;3)-beta-D-GalNAc-(1-&gt;4)-beta-D-GlcA-(1-&gt;3)-beta-D-Gal-(1-&gt;3)-beta-D-Gal-(1-&gt;4)-beta-D-Xyl)-L-seryl-[protein] + UDP + H(+). The catalysed reaction is 3-O-{[beta-D-GalNAc-(1-&gt;4)-beta-D-GlcA-(1-&gt;3)](n)-beta-D-GalNAc-(1-&gt;4)-beta-D-GlcA-(1-&gt;3)-beta-D-Gal-(1-&gt;3)-beta-D-Gal-(1-&gt;4)-beta-D-Xyl}-L-seryl-[protein] + UDP-alpha-D-glucuronate = 3-O-{beta-D-GlcA-(1-&gt;3)-[beta-D-GalNAc-(1-&gt;4)-beta-D-GlcA-(1-&gt;3)](n)-beta-D-GalNAc-(1-&gt;4)-beta-D-GlcA-(1-&gt;3)-beta-D-Gal-(1-&gt;3)-beta-D-Gal-(1-&gt;4)-beta-D-Xyl}-L-seryl-[protein] + UDP + H(+). Its function is as follows. Has both beta-1,3-glucuronic acid and beta-1,4-N-acetylgalactosamine transferase activity. Transfers glucuronic acid (GlcUA) from UDP-GlcUA and N-acetylgalactosamine (GalNAc) from UDP-GalNAc to the non-reducing end of the elongating chondroitin polymer. Seems to act as a specific activating factor for CHSY1 in chondroitin polymerization. In terms of biological role, may facilitate PRKN transport into the mitochondria. In collaboration with PRKN, may enhance cell viability and protect cells from oxidative stress. In Homo sapiens (Human), this protein is Chondroitin sulfate synthase 2.